A 215-amino-acid polypeptide reads, in one-letter code: MDVRFISLTKPEIVIDGEPLSPEGLIAYCARVSSPNQENPNYTKLLQFCIREGHWSIFEMVDMTLEITTTRAIAPQILRHRSFSFQEFSLRYSCATEYECYEARRQDVKNRQNSLDDFDESTKKWFNQAQAAVWEKSHQLYEEALAKGIAKECARSILPLNTVTRLYMKGSVRSWIHYFSVRCDQATQKEHREIALAARKIFMKHFPTVAAALEW.

Residues 1-215 (MDVRFISLTK…FPTVAAALEW (215 aa)) form the ThyX domain. Residues S56, 79–81 (RHR), and E87 each bind FAD. Residues 76–79 (QILR), 87–91 (EFSLR), and R155 contribute to the dUMP site. The short motif at 79–89 (RHRSFSFQEFS) is the ThyX motif element. H177 contacts FAD. R182 lines the dUMP pocket. R182 serves as the catalytic Involved in ionization of N3 of dUMP, leading to its activation.

It belongs to the thymidylate synthase ThyX family. In terms of assembly, homotetramer. FAD serves as cofactor.

It carries out the reaction dUMP + (6R)-5,10-methylene-5,6,7,8-tetrahydrofolate + NADPH + H(+) = dTMP + (6S)-5,6,7,8-tetrahydrofolate + NADP(+). The protein operates within pyrimidine metabolism; dTTP biosynthesis. Functionally, catalyzes the reductive methylation of 2'-deoxyuridine-5'-monophosphate (dUMP) to 2'-deoxythymidine-5'-monophosphate (dTMP) while utilizing 5,10-methylenetetrahydrofolate (mTHF) as the methyl donor, and NADPH and FADH(2) as the reductant. The protein is Flavin-dependent thymidylate synthase of Synechocystis sp. (strain ATCC 27184 / PCC 6803 / Kazusa).